The following is a 338-amino-acid chain: 1-aminocyclopropane-1-carboxylate deaminase (338 aa).

K51 is subject to N6-(pyridoxal phosphate)lysine. Catalysis depends on S78, which acts as the Nucleophile.

The protein belongs to the ACC deaminase/D-cysteine desulfhydrase family. Homotrimer. Pyridoxal 5'-phosphate serves as cofactor.

The catalysed reaction is 1-aminocyclopropane-1-carboxylate + H2O = 2-oxobutanoate + NH4(+). Catalyzes a cyclopropane ring-opening reaction, the irreversible conversion of 1-aminocyclopropane-1-carboxylate (ACC) to ammonia and alpha-ketobutyrate. Allows growth on ACC as a nitrogen source. In Paracidovorax citrulli (strain AAC00-1) (Acidovorax citrulli), this protein is 1-aminocyclopropane-1-carboxylate deaminase.